The following is an 838-amino-acid chain: MIFPILPVISSPEDKQSIDEFSLVGQVLFPIESVSPKKHFIHQFPHDLDIFVNAIDNATTDQIVELLNVGIKQVFVNEKQYHDAIEAGSPSSRFVVAVDVPSTELLTSEASFVTSKPFSESDLKKYNANENRVIYIESNFTQDGAIELAKNYVPVIPSTKLTVKREEENKISISAVFVSTLTTDRPDGLYTTLITTPSPSYTALGIVYSSKDSIIAAIEEKVGVYQSRKRRDELWYKGKTSGATQKLVKLSKDCDSDVIQFMVEPRTGYGFCHRETKFTCFGDDIADSPARGLPKLDSTLQDRLENAPEGSYTKRLFDDEKLLIAKLKEELDELIEAKSKEEIAWECADLVYFAMVWCIKHGVRLADIEKNLDVKSLKVSRRKGDAKPQYQEAPVNSSYKLEIVSVDDAAAVERAMTRPVQKTADIMKLVLPIIEKVKSDGDKALIELTSKFDGVKLDAPVLQAPFPADLMDISEEMKAAIDLSMQNIEKFHAAQLPKEKVMTVETSPGVYCSRFAKPIENVGLYVPGGTAVLPSTAMMLGVPAKVAGCKNIIVASPPSRATGKLTPEVVYVAHKLGAKCIVMAGGAQAVTAMAYGTESVLKCDKILGPGNQFVTAAKMYVQNDTQALCSIDMPAGPSEVLVIADSNADADFVASDLLSQAEHGVDSQVILIGVGLSDEKLNEFQAAVERQAKVLPRKDIVAKCLAHSYILLAKTYKEAFDLSNQYAPEHLILQIDDAPSYVPDSIENAGSVFVGALSPESCGDYSSGTNHTLPTYGYARQYSGVNTATFQKFITSQEVTEKGLQNIGKAVMELARVEGLEAHRRAVEIRMERMAETK.

Residues 1–271 (MIFPILPVIS…MVEPRTGYGF (271 aa)) are phosphoribosyl-AMP cyclohydrolase. A phosphoribosyl-ATP pyrophosphohydrolase region spans residues 272 to 360 (CHRETKFTCF…VYFAMVWCIK (89 aa)). Positions 361 to 838 (HGVRLADIEK…IRMERMAETK (478 aa)) are histidinol dehydrogenase. Positions 660 and 663 each coordinate Zn(2+). Residues Glu-729 and His-730 contribute to the active site. The Zn(2+) site is built by Asp-764 and His-823.

In the C-terminal section; belongs to the histidinol dehydrogenase family. It depends on Zn(2+) as a cofactor.

It carries out the reaction 1-(5-phospho-beta-D-ribosyl)-5'-AMP + H2O = 1-(5-phospho-beta-D-ribosyl)-5-[(5-phospho-beta-D-ribosylamino)methylideneamino]imidazole-4-carboxamide. The catalysed reaction is 1-(5-phospho-beta-D-ribosyl)-ATP + H2O = 1-(5-phospho-beta-D-ribosyl)-5'-AMP + diphosphate + H(+). It catalyses the reaction L-histidinol + 2 NAD(+) + H2O = L-histidine + 2 NADH + 3 H(+). Its pathway is amino-acid biosynthesis; L-histidine biosynthesis; L-histidine from 5-phospho-alpha-D-ribose 1-diphosphate: step 2/9. It participates in amino-acid biosynthesis; L-histidine biosynthesis; L-histidine from 5-phospho-alpha-D-ribose 1-diphosphate: step 3/9. It functions in the pathway amino-acid biosynthesis; L-histidine biosynthesis; L-histidine from 5-phospho-alpha-D-ribose 1-diphosphate: step 9/9. In Candida albicans (Yeast), this protein is Histidine biosynthesis trifunctional protein (HIS4).